Reading from the N-terminus, the 161-residue chain is SsrA-binding protein (161 aa).

The protein belongs to the SmpB family.

The protein resides in the cytoplasm. Its function is as follows. Required for rescue of stalled ribosomes mediated by trans-translation. Binds to transfer-messenger RNA (tmRNA), required for stable association of tmRNA with ribosomes. tmRNA and SmpB together mimic tRNA shape, replacing the anticodon stem-loop with SmpB. tmRNA is encoded by the ssrA gene; the 2 termini fold to resemble tRNA(Ala) and it encodes a 'tag peptide', a short internal open reading frame. During trans-translation Ala-aminoacylated tmRNA acts like a tRNA, entering the A-site of stalled ribosomes, displacing the stalled mRNA. The ribosome then switches to translate the ORF on the tmRNA; the nascent peptide is terminated with the 'tag peptide' encoded by the tmRNA and targeted for degradation. The ribosome is freed to recommence translation, which seems to be the essential function of trans-translation. In Vesicomyosocius okutanii subsp. Calyptogena okutanii (strain HA), this protein is SsrA-binding protein.